A 234-amino-acid chain; its full sequence is Small ribosomal subunit protein uS3 (234 aa).

The KH type-2 domain maps to 39-109 (IRTLINKHYG…EVRIAIYEVK (71 aa)).

Belongs to the universal ribosomal protein uS3 family. Part of the 30S ribosomal subunit. Forms a tight complex with proteins S10 and S14.

Binds the lower part of the 30S subunit head. Binds mRNA in the 70S ribosome, positioning it for translation. The protein is Small ribosomal subunit protein uS3 of Coprothermobacter proteolyticus (strain ATCC 35245 / DSM 5265 / OCM 4 / BT).